The sequence spans 826 residues: Homeobox-leucine zipper protein HDG5 (826 aa).

2 disordered regions span residues 1–34 (MLTM…IQNP) and 69–119 (EMME…HRHT). A compositionally biased stretch (low complexity) spans 23-34 (PSSSSPGTIQNP). A compositionally biased stretch (basic and acidic residues) spans 88-105 (EDPKFGNESDVNELHDDE). Basic residues predominate over residues 110–119 (AKKKRYHRHT). The homeobox DNA-binding region spans 111–170 (KKKRYHRHTNRQIQEMEALFKENPHPDDKQRKRLSAELGLKPRQVKFWFQNRRTQMKAQQ). Residues 165-189 (QMKAQQDRNENVMLRAENDNLKSEN) adopt a coiled-coil conformation. The 245-residue stretch at 314–558 (ADEEKVIAME…LQRQCERIAS (245 aa)) folds into the START domain.

Belongs to the HD-ZIP homeobox family. Class IV subfamily. As to expression, expressed in shoot apical meristem (SAM) with higher levels in L1 cells and the epidermal layer of young leaves. Expressed in the L1 of apical inflorescence meristems, early flower primordia, carpel and stamen filament epidermis, ovule primordia, nucellus and chalaze.

The protein localises to the nucleus. Probable transcription factor. Involved, together with PDF2, in the regulation of flower organs development by promoting the expression of APETALA 3 (AP3) in the epidermis and internal cell layers of developing flowers. The polypeptide is Homeobox-leucine zipper protein HDG5 (Arabidopsis thaliana (Mouse-ear cress)).